Here is a 406-residue protein sequence, read N- to C-terminus: UPF0761 membrane protein NMB0524 (406 aa).

6 helical membrane-spanning segments follow: residues 43 to 63 (LLAL…FPVF), 100 to 120 (LTAI…RTID), 139 to 159 (FLVY…GISF), 176 to 196 (WSGA…LWGL), 210 to 230 (AFVG…LFTW), and 248 to 268 (VPFF…GAVL).

Belongs to the UPF0761 family.

The protein resides in the cell inner membrane. The sequence is that of UPF0761 membrane protein NMB0524 from Neisseria meningitidis serogroup B (strain ATCC BAA-335 / MC58).